Reading from the N-terminus, the 77-residue chain is Ribonuclease P protein component 1 (77 aa).

It belongs to the eukaryotic/archaeal RNase P protein component 1 family. As to quaternary structure, consists of a catalytic RNA component and at least 4-5 protein subunits.

Its subcellular location is the cytoplasm. It catalyses the reaction Endonucleolytic cleavage of RNA, removing 5'-extranucleotides from tRNA precursor.. Functionally, part of ribonuclease P, a protein complex that generates mature tRNA molecules by cleaving their 5'-ends. This is Ribonuclease P protein component 1 from Sulfurisphaera tokodaii (strain DSM 16993 / JCM 10545 / NBRC 100140 / 7) (Sulfolobus tokodaii).